Consider the following 460-residue polypeptide: Chromosomal replication initiator protein DnaA 1 (460 aa).

The tract at residues 1 to 68 is domain I, interacts with DnaA modulators; the sequence is MRAWEEFLLL…KSGLVNNNNK (68 aa). The domain II stretch occupies residues 68–102; that stretch reads KPIRVHVTSVDKAAPFYKEKQMQQEKTAYFTMHYG. A domain III, AAA+ region region spans residues 103–321; it reads SVNPEMTFSN…HALNLLAKRV (219 aa). ATP contacts are provided by G151, G153, K154, and T155. Residues 322 to 460 form a domain IV, binds dsDNA region; it reads MYKKLSHQLL…EFFPSEEMII (139 aa).

Belongs to the DnaA family. As to quaternary structure, oligomerizes as a right-handed, spiral filament on DNA at oriC.

The protein localises to the cytoplasm. Plays an essential role in the initiation and regulation of chromosomal replication. ATP-DnaA binds to the origin of replication (oriC) to initiate formation of the DNA replication initiation complex once per cell cycle. Binds the DnaA box (a 9 base pair repeat at the origin) and separates the double-stranded (ds)DNA. Forms a right-handed helical filament on oriC DNA; dsDNA binds to the exterior of the filament while single-stranded (ss)DNA is stabiized in the filament's interior. The ATP-DnaA-oriC complex binds and stabilizes one strand of the AT-rich DNA unwinding element (DUE), permitting loading of DNA polymerase. After initiation quickly degrades to an ADP-DnaA complex that is not apt for DNA replication. Binds acidic phospholipids. The protein is Chromosomal replication initiator protein DnaA 1 of Chlamydia pneumoniae (Chlamydophila pneumoniae).